We begin with the raw amino-acid sequence, 93 residues long: MIHLGHILFLLLLPVAAAQTTPGERSSLPAFYPGTSGSCSGCGSLSLPLLAGLVAADAVASLLIVGAVFLCARPRRSPAQEDGKVYINMPGRG.

The signal sequence occupies residues 1–18 (MIHLGHILFLLLLPVAAA). At 19-48 (QTTPGERSSLPAFYPGTSGSCSGCGSLSLP) the chain is on the extracellular side. Residues 49 to 69 (LLAGLVAADAVASLLIVGAVF) form a helical membrane-spanning segment. The Cytoplasmic portion of the chain corresponds to 70–93 (LCARPRRSPAQEDGKVYINMPGRG). Tyr-86 bears the Phosphotyrosine mark. Residues 86 to 88 (YIN) are GRB2 binding site. The tract at residues 86–89 (YINM) is PIK3R1 binding site.

The protein belongs to the DAP10 family. As to quaternary structure, interacts with CLEC5A. Forms an CLEC5A/TYROBP/HCST trimolecular complex depending almost solely on TYROBP. Homodimer; Disulfide-linked. Heterohexamer composed of four subunits of HCST/DAP10 and two subunits of KLRK1. Interacts (via transmembrane domain) with KLRK1 (via transmembrane domain); the interaction is required for KLRK1 NK cell surface and induces NK cell-mediated cytotoxicity. Interacts with PIK3R1 and GRB2. Interacts with CD300H. Phosphorylated; PIK3R1 and GRB2 associate specifically with tyrosine-phosphorylated HCST. In terms of processing, O-glycosylated. As to expression, predominantly expressed in hemopoietic cells such as NK cells, subset of T-cells and monocytes. Detected in leukocytes, spleen, and thymus.

It localises to the membrane. In terms of biological role, transmembrane adapter protein which associates with KLRK1 to form an activation receptor KLRK1-HCST in lymphoid and myeloid cells; this receptor plays a major role in triggering cytotoxicity against target cells expressing cell surface ligands such as MHC class I chain-related MICA and MICB, and UL16-binding proteins (ULBPs); these ligands are up-regulated by stress conditions and pathological state such as viral infection and tumor transformation. Functions as a docking site for PI3-kinase PIK3R1 and GRB2. Interaction of ULBPs with KLRK1-HCST triggers calcium mobilization and activation of the PIK3R1, MAP2K/ERK, and JAK2/STAT5 signaling pathways. Both PIK3R1 and GRB2 are required for full KLRK1-HCST-mediated activation and ultimate killing of target cells. In NK cells, KLRK1-HCST signaling directly induces cytotoxicity and enhances cytokine production initiated via DAP12/TYROBP-associated receptors. In T-cells, it provides primarily costimulation for TCR-induced signals. KLRK1-HCST receptor plays a role in immune surveillance against tumors and is required for cytolysis of tumors cells; indeed, melanoma cells that do not express KLRK1 ligands escape from immune surveillance mediated by NK cells. The protein is Hematopoietic cell signal transducer (HCST) of Homo sapiens (Human).